A 142-amino-acid polypeptide reads, in one-letter code: Glutamate-rich protein 2 (142 aa).

2 disordered regions span residues 1 to 55 and 104 to 142; these read MSKN…HAPL and EKAQ…CEDG. A compositionally biased stretch (basic and acidic residues) spans 9–27; the sequence is EQEKNNEHCPEDINDKLSE. The segment covering 28–43 has biased composition (acidic residues); that stretch reads STDDDGEDTSDEDKEE. Residues 44-53 show a composition bias toward basic and acidic residues; that stretch reads DSNPNKDTHA. The segment covering 109 to 142 has biased composition (acidic residues); the sequence is LEEDDDESEEDNSESEGESTEDPSEESSDECEDG.

The polypeptide is Glutamate-rich protein 2 (ERICH2) (Bos taurus (Bovine)).